The sequence spans 232 residues: Putative N-acetylmannosamine-6-phosphate 2-epimerase (232 aa).

The protein belongs to the NanE family.

It carries out the reaction an N-acyl-D-glucosamine 6-phosphate = an N-acyl-D-mannosamine 6-phosphate. Its pathway is amino-sugar metabolism; N-acetylneuraminate degradation; D-fructose 6-phosphate from N-acetylneuraminate: step 3/5. Its function is as follows. Converts N-acetylmannosamine-6-phosphate (ManNAc-6-P) to N-acetylglucosamine-6-phosphate (GlcNAc-6-P). In Proteus mirabilis (strain HI4320), this protein is Putative N-acetylmannosamine-6-phosphate 2-epimerase.